A 358-amino-acid chain; its full sequence is 3-dehydroquinate synthase (358 aa).

Residues 72 to 77 (GGERVK), 106 to 110 (GALLD), 130 to 131 (ST), lysine 143, and lysine 151 contribute to the NAD(+) site. Glutamate 184, histidine 245, and histidine 261 together coordinate Zn(2+).

Belongs to the sugar phosphate cyclases superfamily. Dehydroquinate synthase family. It depends on NAD(+) as a cofactor. Co(2+) serves as cofactor. Requires Zn(2+) as cofactor.

The protein localises to the cytoplasm. The enzyme catalyses 7-phospho-2-dehydro-3-deoxy-D-arabino-heptonate = 3-dehydroquinate + phosphate. Its pathway is metabolic intermediate biosynthesis; chorismate biosynthesis; chorismate from D-erythrose 4-phosphate and phosphoenolpyruvate: step 2/7. In terms of biological role, catalyzes the conversion of 3-deoxy-D-arabino-heptulosonate 7-phosphate (DAHP) to dehydroquinate (DHQ). The protein is 3-dehydroquinate synthase (aroB) of Aeropyrum pernix (strain ATCC 700893 / DSM 11879 / JCM 9820 / NBRC 100138 / K1).